We begin with the raw amino-acid sequence, 412 residues long: MKIYLVGGAVRDALLGLPVKDRDWVVVGSTPQEMLDAGYQQVGRDFPVFLHPQTHEEYALARTERKSGSGYTGFTCYAAPDVTLEDDLKRRDLTINALAQDDNGEIIDPYNGLGDLQNRLLRHVSPAFGEDPLRVLRVARFAARYAHLSFRIADETLALMREMTHAGELEHLTPERVWKETENALTTRNPQVFFQVLRDCGALRVLFPEIDALFGVPAPARWHPEIDTGIHTLMTLSMAAMLSPQVDVRFATLCHDLGKGLTPPELWPRHHGHGPAGVKLVEQLCQRLRVPNEIRDLARLVAEFHDLIHTFPMLNPKTIVKLFDSIDAWRKPQRVEQLALTSEADVRGRTGFESADYPQGRWLREAWEVAQSVPTKAVVEAGFKGVEIREELTRRRIAAVANWKEQRCPKSE.

ATP contacts are provided by Gly8 and Arg11. 2 residues coordinate CTP: Gly8 and Arg11. Mg(2+)-binding residues include Asp21 and Asp23. 3 residues coordinate ATP: Arg91, Arg137, and Arg140. CTP is bound by residues Arg91, Arg137, and Arg140. Positions 228–329 constitute an HD domain; the sequence is TGIHTLMTLS…VKLFDSIDAW (102 aa).

Belongs to the tRNA nucleotidyltransferase/poly(A) polymerase family. Bacterial CCA-adding enzyme type 1 subfamily. Monomer. Can also form homodimers and oligomers. The cofactor is Mg(2+). It depends on Ni(2+) as a cofactor.

It catalyses the reaction a tRNA precursor + 2 CTP + ATP = a tRNA with a 3' CCA end + 3 diphosphate. It carries out the reaction a tRNA with a 3' CCA end + 2 CTP + ATP = a tRNA with a 3' CCACCA end + 3 diphosphate. Its function is as follows. Catalyzes the addition and repair of the essential 3'-terminal CCA sequence in tRNAs without using a nucleic acid template. Adds these three nucleotides in the order of C, C, and A to the tRNA nucleotide-73, using CTP and ATP as substrates and producing inorganic pyrophosphate. tRNA 3'-terminal CCA addition is required both for tRNA processing and repair. Also involved in tRNA surveillance by mediating tandem CCA addition to generate a CCACCA at the 3' terminus of unstable tRNAs. While stable tRNAs receive only 3'-terminal CCA, unstable tRNAs are marked with CCACCA and rapidly degraded. This is Multifunctional CCA protein from Escherichia coli O81 (strain ED1a).